The chain runs to 294 residues: UDP-3-O-acyl-N-acetylglucosamine deacetylase (294 aa).

Residues histidine 75, histidine 232, and aspartate 236 each coordinate Zn(2+). Histidine 259 (proton donor) is an active-site residue.

It belongs to the LpxC family. The cofactor is Zn(2+).

It carries out the reaction a UDP-3-O-[(3R)-3-hydroxyacyl]-N-acetyl-alpha-D-glucosamine + H2O = a UDP-3-O-[(3R)-3-hydroxyacyl]-alpha-D-glucosamine + acetate. The protein operates within glycolipid biosynthesis; lipid IV(A) biosynthesis; lipid IV(A) from (3R)-3-hydroxytetradecanoyl-[acyl-carrier-protein] and UDP-N-acetyl-alpha-D-glucosamine: step 2/6. In terms of biological role, catalyzes the hydrolysis of UDP-3-O-myristoyl-N-acetylglucosamine to form UDP-3-O-myristoylglucosamine and acetate, the committed step in lipid A biosynthesis. This is UDP-3-O-acyl-N-acetylglucosamine deacetylase from Campylobacter fetus subsp. fetus (strain 82-40).